The primary structure comprises 568 residues: Natural resistance-associated macrophage protein 2 (568 aa).

Basic and acidic residues predominate over residues 1-20 (MVLDPEEKIPDDGASGDHGD). Positions 1–45 (MVLDPEEKIPDDGASGDHGDSASLGAINPAYSNSSLPHSTGDSEE) are disordered. Residues 1–69 (MVLDPEEKIP…EEYSCFSFRK (69 aa)) lie on the Cytoplasmic side of the membrane. Over residues 30-40 (AYSNSSLPHST) the composition is skewed to polar residues. The helical transmembrane segment at 70 to 90 (LWAFTGPGFLMSIAYLDPGNI) threads the bilayer. Residues 91 to 95 (ESDLQ) lie on the Extracellular side of the membrane. The chain crosses the membrane as a helical span at residues 96–117 (SGAVAGFKLLWVLLLATIVGLL). The Cytoplasmic portion of the chain corresponds to 118–154 (LQRLAARLGVVTGLHLAEVCHRQYPKVPRIILWLMVE). The helical transmembrane segment at 155–175 (LAIIGSDMQEVIGSAIAINLL) threads the bilayer. Residues 176–179 (SAGR) are Extracellular-facing. A helical transmembrane segment spans residues 180–194 (VPLYGGVLITIADTF). Residues 195 to 208 (VFLFLDKYGLRKLE) are Cytoplasmic-facing. A helical membrane pass occupies residues 209-229 (AFFGFLITIMALTFGYEYVTV). The Extracellular segment spans residues 230-255 (KPSQSQVLRGMFVPSCSGCHTPQVEQ). A helical transmembrane segment spans residues 256–276 (AVGIVGAVIMPHNMYLHSALV). Over 277–301 (KSRQVNRANKQEVREANKYFFIESC) the chain is Cytoplasmic. The helical transmembrane segment at 302–322 (IALFVSFIINVFVVSVFAEAF) threads the bilayer. Topologically, residues 323 to 360 (FEKTNEQVVEVCRNSSSPHADLFPNDNSTLAVDIYKGG) are extracellular. Residues asparagine 336 and asparagine 349 are each glycosylated (N-linked (GlcNAc...) asparagine). Residues 361–381 (VVLGCYFGPAALYIWAVGILA) form a helical membrane-spanning segment. The Cytoplasmic segment spans residues 382 to 408 (AGQSSTMTGTYSGQFVMEGFLNLKWSR). The helical transmembrane segment at 409-429 (FARVILTRSIAIIPTLLVAVF) threads the bilayer. At 430 to 440 (QDVEHLTGMND) the chain is on the extracellular side. The helical transmembrane segment at 441-461 (FLNVLQSLQLPFALIPILTFT) threads the bilayer. The Cytoplasmic segment spans residues 462-482 (SLRPVMSEFSNGIGWRIAGGI). Residues 483–503 (LVLLVCSINMYFVVVYVQELG) form a helical membrane-spanning segment. The Extracellular segment spans residues 504–506 (HVA). Residues 507–527 (LYVVAAVVSVAYLGFVFYLGW) traverse the membrane as a helical segment. The Cytoplasmic portion of the chain corresponds to 528–568 (QCLIALGLSFLDCGRSYHLGLTARPEIYLLNTVDAVSLVSR). A required for early endosome targeting region spans residues 555 to 559 (YLLNT). Leucine 556, serine 564, and serine 567 each carry phosphoserine.

The protein belongs to the NRAMP family. Forms a complex with NDFIP1 and NEDD4L, in cortical neurons, in response to iron and cobalt exposure; this interaction leads to SLC11A2 ubiquitination by NEDD4L and proteasome-dependent degradation. Interacts with NDFIP1, NDFIP2 and WWP2; this interaction leads to SLC11A2 ubiquitination by WWP2 and subsequent proteasome-dependent degradation. Interacts with COX2 and TOM6 at the outer mitochondrion membrane. Interacts with ARRDC1; this interaction regulates the incorporation of SLC11A2 into extracellular vesicles through an ubiquitination-dependent mechanism. Interacts with ARRDC4; controls the incorporation of SLC11A2 into extracellular vesicles through an ubiquitination-dependent mechanism. Post-translationally, ubiquitinated by WWP2. In terms of processing, N-glycosylated. As to expression, ubiquitous. Expressed in proximal intestine, kidney and brain.

It localises to the golgi apparatus. Its subcellular location is the trans-Golgi network membrane. The protein localises to the early endosome membrane. The protein resides in the recycling endosome membrane. It is found in the late endosome membrane. It localises to the lysosome membrane. Its subcellular location is the apical cell membrane. The protein localises to the mitochondrion outer membrane. The protein resides in the extracellular vesicle membrane. It carries out the reaction Fe(2+)(in) + H(+)(in) = Fe(2+)(out) + H(+)(out). It catalyses the reaction Cd(2+)(out) + H(+)(out) = Cd(2+)(in) + H(+)(in). The catalysed reaction is Co(2+)(out) + H(+)(out) = Co(2+)(in) + H(+)(in). The enzyme catalyses Mn(2+)(in) + H(+)(in) = Mn(2+)(out) + H(+)(out). It carries out the reaction Zn(2+)(out) + H(+)(out) = Zn(2+)(in) + H(+)(in). It catalyses the reaction Ni(2+)(out) + H(+)(out) = Ni(2+)(in) + H(+)(in). The catalysed reaction is H(+)(in) = H(+)(out). The enzyme catalyses Fe(2+)(in) = Fe(2+)(out). Its activity is regulated as follows. Inhibited by 2-(3-carbamimidoylsulfanylmethyl-benzyl)-isothiourea. Proton-coupled metal ion symporter operating with a proton to metal ion stoichiometry of 1:1. Selectively transports various divalent metal cations, in decreasing affinity: Cd(2+) &gt; Fe(2+) &gt; Co(2+), Mn(2+) &gt;&gt; Zn(2+), Ni(2+), VO(2+). Essential for maintenance of iron homeostasis by modulating intestinal absorption of dietary Fe(2+) and TF-associated endosomal Fe(2+) transport in erythroid precursors and other cells. Enables Fe(2+) and Mn(2+) ion entry into mitochondria, and is thus expected to promote mitochondrial heme synthesis, iron-sulfur cluster biogenesis and antioxidant defense. Can mediate uncoupled fluxes of either protons or metal ions. This is Natural resistance-associated macrophage protein 2 (Slc11a2) from Rattus norvegicus (Rat).